Reading from the N-terminus, the 549-residue chain is TBC1 domain family member 3 (549 aa).

Residues Gly-101–Gly-293 form the Rab-GAP TBC domain. Residues Cys-318 and Cys-325 are each lipidated (S-palmitoyl cysteine). A disordered region spans residues Leu-350 to Gly-419. The segment covering Pro-398–Pro-417 has biased composition (low complexity).

Post-translationally, ubiquitinated by a CUL7-based E3 ligase, which leads to proteasomal degradation. In terms of processing, palmitoylation is required for membrane localization and protects TBC1D3 from ubiquitination. In terms of tissue distribution, expressed in liver, skeletal muscle, kidney, pancreas, spleen, testis, ovary, small intestine and peripheral blood leukocytes. Overexpressed in prostate cancers.

Its subcellular location is the cell membrane. Its function is as follows. Acts as a GTPase activating protein for RAB5. Does not act on RAB4 or RAB11. The chain is TBC1 domain family member 3 (TBC1D3) from Homo sapiens (Human).